Here is a 144-residue protein sequence, read N- to C-terminus: Large ribosomal subunit protein uL15 (144 aa).

The tract at residues 1–54 is disordered; the sequence is MHLNTLKPAEGAKKLAKRKGRGQGSGNGKMAGRGHKGQKSRSGGMPKIGFEGGQ. Positions 22 to 31 are enriched in gly residues; sequence GQGSGNGKMA.

Belongs to the universal ribosomal protein uL15 family. Part of the 50S ribosomal subunit.

Binds to the 23S rRNA. The protein is Large ribosomal subunit protein uL15 of Hydrogenovibrio crunogenus (strain DSM 25203 / XCL-2) (Thiomicrospira crunogena).